Reading from the N-terminus, the 356-residue chain is Sorbitol dehydrogenase (356 aa).

Cysteine 44 contributes to the Zn(2+) binding site. Tyrosine 50 is a binding site for substrate. Zn(2+)-binding residues include histidine 69 and glutamate 70. Residue glutamate 155 participates in substrate binding. 3 residues coordinate NAD(+): isoleucine 183, aspartate 203, and arginine 208. Phosphoserine is present on residues serine 210 and serine 224. Residues 272–274 and 296–298 each bind NAD(+); these read VGL and VFR. Substrate contacts are provided by arginine 298 and tyrosine 299.

It belongs to the zinc-containing alcohol dehydrogenase family. Homotetramer. The cofactor is Zn(2+). As to expression, expressed in lens.

It is found in the mitochondrion membrane. The protein resides in the cell projection. It localises to the cilium. Its subcellular location is the flagellum. It carries out the reaction xylitol + NAD(+) = D-xylulose + NADH + H(+). The catalysed reaction is keto-D-fructose + NADH + H(+) = D-sorbitol + NAD(+). The enzyme catalyses L-iditol + NAD(+) = keto-L-sorbose + NADH + H(+). With respect to regulation, inhibited in vitro by metal chelators such as EDTA and 1,10-phenanthroline. Its function is as follows. Polyol dehydrogenase that catalyzes the reversible NAD(+)-dependent oxidation of various sugar alcohols. Is mostly active with xylitol, D-sorbitol (D-glucitol) and L-iditol as substrates, leading to the C2-oxidized products D-xylulose, D-fructose and L-sorbose, respectively. Is a key enzyme in the polyol pathway that interconverts glucose and fructose via sorbitol, which constitutes an important alternate route for glucose metabolism. May play a role in sperm motility by using sorbitol as an alternative energy source for sperm motility. Cannot use NADP(+) as the electron acceptor. Has no activity on ethanol, methanol, glycerol, galactitol and fructose 6-phosphate. The protein is Sorbitol dehydrogenase (SORD) of Bos taurus (Bovine).